A 377-amino-acid chain; its full sequence is Serine/threonine-protein phosphatase PP2A-2 catalytic subunit (377 aa).

The disordered stretch occupies residues 1–66; it reads MDMEIDDPMH…SGIADHKSSK (66 aa). Residues 28 to 40 show a composition bias toward basic and acidic residues; it reads DDGKNNTKARSND. At serine 38 the chain carries Phosphoserine. Position 43 is a phosphothreonine (threonine 43). Residues aspartate 125, histidine 127, aspartate 153, and asparagine 185 each coordinate Mn(2+). Histidine 186 serves as the catalytic Proton donor. Residues histidine 235 and histidine 309 each contribute to the Mn(2+) site. At leucine 377 the chain carries Leucine methyl ester.

It belongs to the PPP phosphatase family. PP-2A subfamily. In terms of assembly, inactivated in a complex with phosphatase methylesterase PPE1 (PP2Ai). Interacts with phosphatase 2A activator RRD2, which can reactivate PP2Ai by dissociating the catalytic subunit from the complex. Interacts with TAP42. It depends on Mn(2+) as a cofactor. In terms of processing, reversibly methyl esterified on Leu-377 by leucine carboxyl methyltransferase 1 (PPM1) and protein phosphatase methylesterase 1 (PPE1). Carboxyl methylation influences the affinity of the catalytic subunit for the different regulatory subunits, thereby modulating the PP2A holoenzyme's substrate specificity, enzyme activity and cellular localization.

The catalysed reaction is O-phospho-L-seryl-[protein] + H2O = L-seryl-[protein] + phosphate. The enzyme catalyses O-phospho-L-threonyl-[protein] + H2O = L-threonyl-[protein] + phosphate. Its function is as follows. Exact function not known, phosphatase 2A performs an essential cellular function. This chain is Serine/threonine-protein phosphatase PP2A-2 catalytic subunit (PPH22), found in Saccharomyces cerevisiae (strain ATCC 204508 / S288c) (Baker's yeast).